A 250-amino-acid polypeptide reads, in one-letter code: 1-(5-phosphoribosyl)-5-[(5-phosphoribosylamino)methylideneamino] imidazole-4-carboxamide isomerase (250 aa).

Asp8 acts as the Proton acceptor in catalysis. The active-site Proton donor is Asp131.

Belongs to the HisA/HisF family.

It localises to the cytoplasm. The enzyme catalyses 1-(5-phospho-beta-D-ribosyl)-5-[(5-phospho-beta-D-ribosylamino)methylideneamino]imidazole-4-carboxamide = 5-[(5-phospho-1-deoxy-D-ribulos-1-ylimino)methylamino]-1-(5-phospho-beta-D-ribosyl)imidazole-4-carboxamide. The protein operates within amino-acid biosynthesis; L-histidine biosynthesis; L-histidine from 5-phospho-alpha-D-ribose 1-diphosphate: step 4/9. This is 1-(5-phosphoribosyl)-5-[(5-phosphoribosylamino)methylideneamino] imidazole-4-carboxamide isomerase from Paraburkholderia phymatum (strain DSM 17167 / CIP 108236 / LMG 21445 / STM815) (Burkholderia phymatum).